Consider the following 432-residue polypeptide: Trigger factor (432 aa).

The region spanning E161–P246 is the PPIase FKBP-type domain.

Belongs to the FKBP-type PPIase family. Tig subfamily.

It localises to the cytoplasm. It catalyses the reaction [protein]-peptidylproline (omega=180) = [protein]-peptidylproline (omega=0). Its function is as follows. Involved in protein export. Acts as a chaperone by maintaining the newly synthesized protein in an open conformation. Functions as a peptidyl-prolyl cis-trans isomerase. The chain is Trigger factor from Enterobacter sp. (strain 638).